The primary structure comprises 673 residues: F420-dependent formate dehydrogenase subunit alpha (673 aa).

Residues 3 to 59 (FKIVNTICPYCGVGCGLGLVVKDGRVIGIHPNKRHPINEGKLCAKGNYCYQFIHSKD) form the 4Fe-4S Mo/W bis-MGD-type domain. The [4Fe-4S] cluster site is built by cysteine 10, cysteine 13, cysteine 17, and cysteine 45. Selenocysteine 131 is a non-standard amino acid (selenocysteine).

The protein belongs to the prokaryotic molybdopterin-containing oxidoreductase family. In terms of assembly, dimer of an alpha (FdhA) and a beta (FdhB) subunit. The cofactor is [4Fe-4S] cluster. It depends on Mo-bis(molybdopterin guanine dinucleotide) as a cofactor. Zn(2+) is required as a cofactor.

The enzyme catalyses oxidized coenzyme F420-(gamma-L-Glu)(n) + formate + 2 H(+) = reduced coenzyme F420-(gamma-L-Glu)(n) + CO2. Functionally, catalyzes the oxidation of formate to carbon dioxide, with coenzyme F420 as the electron acceptor. This Methanocaldococcus jannaschii (strain ATCC 43067 / DSM 2661 / JAL-1 / JCM 10045 / NBRC 100440) (Methanococcus jannaschii) protein is F420-dependent formate dehydrogenase subunit alpha (fdhA).